A 561-amino-acid chain; its full sequence is DNA ligase B (561 aa).

Lys-125 acts as the N6-AMP-lysine intermediate in catalysis.

It belongs to the NAD-dependent DNA ligase family. LigB subfamily.

The enzyme catalyses NAD(+) + (deoxyribonucleotide)n-3'-hydroxyl + 5'-phospho-(deoxyribonucleotide)m = (deoxyribonucleotide)n+m + AMP + beta-nicotinamide D-nucleotide.. Its function is as follows. Catalyzes the formation of phosphodiester linkages between 5'-phosphoryl and 3'-hydroxyl groups in double-stranded DNA using NAD as a coenzyme and as the energy source for the reaction. This Escherichia coli O127:H6 (strain E2348/69 / EPEC) protein is DNA ligase B.